The chain runs to 416 residues: Keratin, type I cuticular Ha1 (416 aa).

The head stretch occupies residues 1–56 (MPYNFCLPSLSCRTSCSSRPCVPPSCHSCTLPGACNIPANVSNCNWFCEGSFNGSE). The region spanning 56 to 367 (EKETMQFLND…SLLESEDCNL (312 aa)) is the IF rod domain. The segment at 57 to 91 (KETMQFLNDRLASYLEKVRQLERDNAELENLIRER) is coil 1A. A linker 1 region spans residues 92–102 (SQQQEPLLCPS). Positions 103 to 203 (YQSYFKTIEE…HEQEVNTLRC (101 aa)) are coil 1B. A linker 12 region spans residues 204–219 (QLGDRLNVEVDAAPTV). The interval 220-363 (DLNRVLNETR…NTYRSLLESE (144 aa)) is coil 2. The interval 364 to 416 (DCNLPSNPCATTNACSKPIGPCLSNPCTPCVPPAPCTPCAPRPRCGPCNSFVR) is tail.

This sequence belongs to the intermediate filament family.

The protein is Keratin, type I cuticular Ha1 (KRT31) of Pan troglodytes (Chimpanzee).